The primary structure comprises 334 residues: PDZ domain-containing protein MAGIX (334 aa).

2 stretches are compositionally biased toward basic and acidic residues: residues 1 to 13 (MEPR…DPRG) and 209 to 224 (LETH…EPRK). Disordered stretches follow at residues 1–26 (MEPR…LAGP) and 209–306 (LETH…WLVP). One can recognise a PDZ domain in the interval 125–209 (SVELVRGYAG…QLHLVIRRPL (85 aa)). The span at 244-260 (GSRSSSTSLVQHPPSRT) shows a compositional bias: polar residues. Residue Ser272 is modified to Phosphoserine.

This chain is PDZ domain-containing protein MAGIX (MAGIX), found in Homo sapiens (Human).